Reading from the N-terminus, the 389-residue chain is Chalcone synthase 1 (389 aa).

The active site involves cysteine 164.

This sequence belongs to the thiolase-like superfamily. Chalcone/stilbene synthases family.

The enzyme catalyses (E)-4-coumaroyl-CoA + 3 malonyl-CoA + 3 H(+) = 2',4,4',6'-tetrahydroxychalcone + 3 CO2 + 4 CoA. It participates in secondary metabolite biosynthesis; flavonoid biosynthesis. The primary product of this enzyme is 4,2',4',6'-tetrahydroxychalcone (also termed naringenin-chalcone or chalcone) which can under specific conditions spontaneously isomerize into naringenin. This Trifolium subterraneum (Subterranean clover) protein is Chalcone synthase 1 (CHS1).